A 459-amino-acid chain; its full sequence is Bifunctional protein GlmU (459 aa).

The pyrophosphorylase stretch occupies residues 1–229 (MSNFAIILAA…FDESLGVNDR (229 aa)). Residues 8 to 11 (LAAG), Lys-22, Gln-72, and 77 to 78 (GT) contribute to the UDP-N-acetyl-alpha-D-glucosamine site. Asp-102 lines the Mg(2+) pocket. Residues Gly-139, Glu-154, Asn-169, and Asn-227 each contribute to the UDP-N-acetyl-alpha-D-glucosamine site. Residue Asn-227 coordinates Mg(2+). A linker region spans residues 230-250 (VALATAESVMRRRINHKHMVN). The interval 251–459 (GVSFVNPEAT…TRLPHHPKNQ (209 aa)) is N-acetyltransferase. UDP-N-acetyl-alpha-D-glucosamine is bound by residues Arg-332 and Lys-350. The active-site Proton acceptor is the His-362. Residues Tyr-365 and Asn-376 each coordinate UDP-N-acetyl-alpha-D-glucosamine. Acetyl-CoA contacts are provided by residues Ala-379, 385 to 386 (NY), Ser-404, Ala-422, and Arg-439.

In the N-terminal section; belongs to the N-acetylglucosamine-1-phosphate uridyltransferase family. It in the C-terminal section; belongs to the transferase hexapeptide repeat family. In terms of assembly, homotrimer. Requires Mg(2+) as cofactor.

It localises to the cytoplasm. It carries out the reaction alpha-D-glucosamine 1-phosphate + acetyl-CoA = N-acetyl-alpha-D-glucosamine 1-phosphate + CoA + H(+). The catalysed reaction is N-acetyl-alpha-D-glucosamine 1-phosphate + UTP + H(+) = UDP-N-acetyl-alpha-D-glucosamine + diphosphate. It participates in nucleotide-sugar biosynthesis; UDP-N-acetyl-alpha-D-glucosamine biosynthesis; N-acetyl-alpha-D-glucosamine 1-phosphate from alpha-D-glucosamine 6-phosphate (route II): step 2/2. It functions in the pathway nucleotide-sugar biosynthesis; UDP-N-acetyl-alpha-D-glucosamine biosynthesis; UDP-N-acetyl-alpha-D-glucosamine from N-acetyl-alpha-D-glucosamine 1-phosphate: step 1/1. Its pathway is bacterial outer membrane biogenesis; LPS lipid A biosynthesis. Functionally, catalyzes the last two sequential reactions in the de novo biosynthetic pathway for UDP-N-acetylglucosamine (UDP-GlcNAc). The C-terminal domain catalyzes the transfer of acetyl group from acetyl coenzyme A to glucosamine-1-phosphate (GlcN-1-P) to produce N-acetylglucosamine-1-phosphate (GlcNAc-1-P), which is converted into UDP-GlcNAc by the transfer of uridine 5-monophosphate (from uridine 5-triphosphate), a reaction catalyzed by the N-terminal domain. The chain is Bifunctional protein GlmU from Streptococcus pneumoniae serotype 2 (strain D39 / NCTC 7466).